A 228-amino-acid polypeptide reads, in one-letter code: ATP-dependent dethiobiotin synthetase BioD (228 aa).

13 to 18 (DVGKTV) is a binding site for ATP. T17 is a binding site for Mg(2+). K38 is an active-site residue. Residues D55, 116–119 (EGAG), 176–177 (NR), and 205–207 (PYI) contribute to the ATP site. Mg(2+) contacts are provided by D55 and E116.

Belongs to the dethiobiotin synthetase family. In terms of assembly, homodimer. Mg(2+) is required as a cofactor.

The protein localises to the cytoplasm. The catalysed reaction is (7R,8S)-7,8-diammoniononanoate + CO2 + ATP = (4R,5S)-dethiobiotin + ADP + phosphate + 3 H(+). It functions in the pathway cofactor biosynthesis; biotin biosynthesis; biotin from 7,8-diaminononanoate: step 1/2. Functionally, catalyzes a mechanistically unusual reaction, the ATP-dependent insertion of CO2 between the N7 and N8 nitrogen atoms of 7,8-diaminopelargonic acid (DAPA, also called 7,8-diammoniononanoate) to form a ureido ring. The polypeptide is ATP-dependent dethiobiotin synthetase BioD (Vibrio parahaemolyticus serotype O3:K6 (strain RIMD 2210633)).